We begin with the raw amino-acid sequence, 213 residues long: Golgi SNAP receptor complex member 2 homolog memb-1 (213 aa).

Residues 1 to 189 (MEALYQSTNF…QVIDRRVRED (189 aa)) are Cytoplasmic-facing. A helical; Anchor for type IV membrane protein transmembrane segment spans residues 190-210 (WILFVIGCIVCCIFMYAFYRF). The Vesicular portion of the chain corresponds to 211–213 (WRG).

This sequence belongs to the GOSR2 family. As to quaternary structure, part of a unique SNARE complex.

The protein localises to the golgi apparatus. It localises to the cis-Golgi network membrane. Its subcellular location is the golgi apparatus membrane. It is found in the endoplasmic reticulum membrane. Functionally, involved in transport of proteins from the cis/medial-Golgi to the trans-Golgi network. This is Golgi SNAP receptor complex member 2 homolog memb-1 from Caenorhabditis elegans.